A 323-amino-acid chain; its full sequence is tRNA dimethylallyltransferase (323 aa).

ATP is bound at residue 12-19 (GPTAAGKT). A substrate-binding site is contributed by 14–19 (TAAGKT). 2 interaction with substrate tRNA regions span residues 37–40 (DSAL) and 161–165 (QRLIR).

It belongs to the IPP transferase family. As to quaternary structure, monomer. Requires Mg(2+) as cofactor.

It catalyses the reaction adenosine(37) in tRNA + dimethylallyl diphosphate = N(6)-dimethylallyladenosine(37) in tRNA + diphosphate. Its function is as follows. Catalyzes the transfer of a dimethylallyl group onto the adenine at position 37 in tRNAs that read codons beginning with uridine, leading to the formation of N6-(dimethylallyl)adenosine (i(6)A). The sequence is that of tRNA dimethylallyltransferase from Pseudomonas putida (strain W619).